The sequence spans 430 residues: Centrosomal protein CEP57L1 (430 aa).

S45 carries the post-translational modification Phosphoserine. A coiled-coil region spans residues 46 to 213 (PNNQALVSAL…HQRRLFQDRA (168 aa)). Disordered regions lie at residues 248–290 (CLKR…GEPF) and 362–430 (RKLQ…KWEQ). Composition is skewed to basic and acidic residues over residues 249 to 272 (LKREPPQHTDCRFRGPASERERPP), 362 to 372 (RKLQEKVENSR), and 421 to 430 (LRRDDVKWEQ). A coiled-coil region spans residues 290–377 (FSICDNLSEL…VENSRINESS (88 aa)).

The protein belongs to the translokin family.

The protein localises to the cytoplasm. Its subcellular location is the cytoskeleton. The protein resides in the microtubule organizing center. It is found in the centrosome. Centrosomal protein which may be required for microtubule attachment to centrosomes. This chain is Centrosomal protein CEP57L1 (Cep57l1), found in Rattus norvegicus (Rat).